A 454-amino-acid chain; its full sequence is Nuclear envelope integral membrane protein (454 aa).

Positions 1–18 (MHSAGLLMLTVAGYFTSG) are cleaved as a signal peptide. Residue N38 is glycosylated (N-linked (GlcNAc...) asparagine). 5 helical membrane-spanning segments follow: residues 138-158 (IPLD…LFSA), 166-186 (VFYY…VVIY), 197-217 (MMYG…KQLA), 231-251 (VLGY…RIGP), and 280-300 (TSAV…PISW). The segment covering 388 to 405 (SMDAAPEEESVEEPEEDK) has biased composition (acidic residues). Residues 388–454 (SMDAAPEEES…QEVDLRQVVQ (67 aa)) form a disordered region. Over residues 414-424 (NSQFRYQQAAR) the composition is skewed to polar residues. A compositionally biased stretch (acidic residues) spans 428–446 (PEPESESDDSEEEEFFEQE).

The protein belongs to the NEMP family. Interacts with OTE. Expressed in both germline and somatic cells in the larval testis and prepupal ovary (at protein level). Also detected in the larval eye and larval wing disk (at protein level).

It is found in the nucleus inner membrane. Functionally, contributes to nuclear envelope stiffness in germ cells. Required for male and female fertility. The sequence is that of Nuclear envelope integral membrane protein from Drosophila melanogaster (Fruit fly).